We begin with the raw amino-acid sequence, 119 residues long: Beta-2-microglobulin (119 aa).

A signal peptide spans 1-20; the sequence is MARSVVVSLFVLLALAGLEA. In terms of domain architecture, Ig-like C1-type spans 25 to 114; it reads PKIQVYSRHP…VTFQTPKTVK (90 aa).

It belongs to the beta-2-microglobulin family. In terms of assembly, heterodimer of an alpha chain and a beta chain. Beta-2-microglobulin is the beta-chain of major histocompatibility complex class I molecules.

The protein localises to the secreted. Functionally, component of the class I major histocompatibility complex (MHC). Involved in the presentation of peptide antigens to the immune system. This chain is Beta-2-microglobulin (B2M), found in Brachyteles arachnoides (Southern muriqui).